The sequence spans 467 residues: Glutamate--tRNA ligase (467 aa).

Positions 9–19 (PSPTGYLHIGG) match the 'HIGH' region motif. Positions 237–241 (KLSKR) match the 'KMSKS' region motif. ATP is bound at residue Lys-240.

It belongs to the class-I aminoacyl-tRNA synthetase family. Glutamate--tRNA ligase type 1 subfamily. As to quaternary structure, monomer.

The protein localises to the cytoplasm. The enzyme catalyses tRNA(Glu) + L-glutamate + ATP = L-glutamyl-tRNA(Glu) + AMP + diphosphate. Catalyzes the attachment of glutamate to tRNA(Glu) in a two-step reaction: glutamate is first activated by ATP to form Glu-AMP and then transferred to the acceptor end of tRNA(Glu). The polypeptide is Glutamate--tRNA ligase (Xanthomonas axonopodis pv. citri (strain 306)).